The primary structure comprises 226 residues: ATP synthase subunit a (226 aa).

Transmembrane regions (helical) follow at residues 18 to 38 (FIIGFHTLLVAVILLILARYA), 44 to 64 (VVPSGIQNVFEFIISGIISFA), 79 to 99 (LAATIAFLVFFGNAIGIIPGF), 105 to 125 (SWSFTLVLALVVFFYYHFEGI), 137 to 157 (FMGPVWWLAPLMFPVEIISHF), 177 to 197 (FLLVMLMLAPWIVPVAPFAIL), and 202 to 222 (LLQAFVFMILTYVYIHGAVVV).

This sequence belongs to the ATPase A chain family. As to quaternary structure, F-type ATPases have 2 components, CF(1) - the catalytic core - and CF(0) - the membrane proton channel. CF(1) has five subunits: alpha(3), beta(3), gamma(1), delta(1), epsilon(1). CF(0) has three main subunits: a(1), b(2) and c(9-12). The alpha and beta chains form an alternating ring which encloses part of the gamma chain. CF(1) is attached to CF(0) by a central stalk formed by the gamma and epsilon chains, while a peripheral stalk is formed by the delta and b chains.

The protein resides in the cell inner membrane. Key component of the proton channel; it plays a direct role in the translocation of protons across the membrane. The chain is ATP synthase subunit a from Helicobacter hepaticus (strain ATCC 51449 / 3B1).